A 212-amino-acid chain; its full sequence is NAD(P)H-hydrate epimerase (212 aa).

One can recognise a YjeF N-terminal domain in the interval 11 to 212 (MRHYDFYTIN…ANDMGTYAVD (202 aa)). 60 to 64 (NNGGD) contributes to the (6S)-NADPHX binding site. Residues N61 and D123 each contribute to the K(+) site. (6S)-NADPHX-binding positions include 127-133 (GIGIDRA), Y138, and D156. S159 contributes to the K(+) binding site.

The protein belongs to the NnrE/AIBP family. The cofactor is K(+).

It catalyses the reaction (6R)-NADHX = (6S)-NADHX. The catalysed reaction is (6R)-NADPHX = (6S)-NADPHX. In terms of biological role, catalyzes the epimerization of the S- and R-forms of NAD(P)HX, a damaged form of NAD(P)H that is a result of enzymatic or heat-dependent hydration. This is a prerequisite for the S-specific NAD(P)H-hydrate dehydratase to allow the repair of both epimers of NAD(P)HX. The chain is NAD(P)H-hydrate epimerase from Limosilactobacillus reuteri (strain DSM 20016) (Lactobacillus reuteri).